A 126-amino-acid chain; its full sequence is Large ribosomal subunit protein uL29 (126 aa).

Belongs to the universal ribosomal protein uL29 family.

This is Large ribosomal subunit protein uL29 (rpl35) from Dictyostelium discoideum (Social amoeba).